We begin with the raw amino-acid sequence, 187 residues long: Large ribosomal subunit protein uL6 (187 aa).

This sequence belongs to the universal ribosomal protein uL6 family. As to quaternary structure, part of the 50S ribosomal subunit.

This protein binds to the 23S rRNA, and is important in its secondary structure. It is located near the subunit interface in the base of the L7/L12 stalk, and near the tRNA binding site of the peptidyltransferase center. In Thermosynechococcus vestitus (strain NIES-2133 / IAM M-273 / BP-1), this protein is Large ribosomal subunit protein uL6.